The primary structure comprises 557 residues: MAFNRRSKNITQGISRSPNRSMYYAMGYEKEDFDKPMVGVANGHSTITPCNSGLQKLADIAIKTIKDSGGNPQVFGTPTISDGMSMGTEGMKYSLISREVIADCIETAVNGQWMDGVLVIGGCDKNMPGGMIAMLRTNVPSIYVYGGTIKPGNWKGKDLTIVSAFEAVGEFTAGRMSQEDFDGIERNACPSAGSCGGMYTANTMSSSFEALGLALPYSSTMANPDDEKVGSAAESARVLIEAIKNDLKPRDIVTRKAIENAVAVIMATGGSTNAVLHFLAIAHAAEVEWTIDDFERMRKKVPVICDLKPSGKYVATDLHKAGGIPQVMKVLLDAGLLHGDCMTITGQTVAEALAHIPSVPRADQHVIHPIKDALYEQGHLAILKGNLSPEGCVAKITGLKNPVITGPARVFDDEYSAMDAIMANKIVAGDVLVMRYLGPKGGPGMPEMLAPTSALVGQGLGESVGLITDGRFSGGTWGMVVGHVSPEAFVGGLIGLVEEGDSVTIDAHKLLIQLNVPEEEIARRRANWKQPAPRYTRGVLSKFAALASSASKGAVTG.

Cys-50 is a [2Fe-2S] cluster binding site. Asp-82 contributes to the Mg(2+) binding site. Cys-123 is a [2Fe-2S] cluster binding site. 2 residues coordinate Mg(2+): Asp-124 and Lys-125. Residue Lys-125 is modified to N6-carboxylysine. Position 195 (Cys-195) interacts with [2Fe-2S] cluster. Glu-447 is a binding site for Mg(2+). Ser-473 serves as the catalytic Proton acceptor.

Belongs to the IlvD/Edd family. Homodimer. [2Fe-2S] cluster is required as a cofactor. Requires Mg(2+) as cofactor.

The catalysed reaction is (2R)-2,3-dihydroxy-3-methylbutanoate = 3-methyl-2-oxobutanoate + H2O. It carries out the reaction (2R,3R)-2,3-dihydroxy-3-methylpentanoate = (S)-3-methyl-2-oxopentanoate + H2O. Its pathway is amino-acid biosynthesis; L-isoleucine biosynthesis; L-isoleucine from 2-oxobutanoate: step 3/4. It functions in the pathway amino-acid biosynthesis; L-valine biosynthesis; L-valine from pyruvate: step 3/4. Its function is as follows. Functions in the biosynthesis of branched-chain amino acids. Catalyzes the dehydration of (2R,3R)-2,3-dihydroxy-3-methylpentanoate (2,3-dihydroxy-3-methylvalerate) into 2-oxo-3-methylpentanoate (2-oxo-3-methylvalerate) and of (2R)-2,3-dihydroxy-3-methylbutanoate (2,3-dihydroxyisovalerate) into 2-oxo-3-methylbutanoate (2-oxoisovalerate), the penultimate precursor to L-isoleucine and L-valine, respectively. This Janthinobacterium sp. (strain Marseille) (Minibacterium massiliensis) protein is Dihydroxy-acid dehydratase.